A 397-amino-acid chain; its full sequence is Flavohemoprotein (397 aa).

The region spanning 4–140 is the Globin domain; the sequence is SFSPHTITLI…IANLLKDREA (137 aa). His-87 serves as a coordination point for heme b. Residues Tyr-97 and Glu-139 each act as charge relay system in the active site. Residues 151–397 are reductase; it reads GGWIHWRRFV…FGPMDEEMAA (247 aa). The 105-residue stretch at 154 to 258 folds into the FAD-binding FR-type domain; the sequence is IHWRRFVISK…TPPVGDFFLP (105 aa). FAD contacts are provided by residues Tyr-192 and 207 to 210; that span reads RNYS. 271–276 lines the NADP(+) pocket; that stretch reads GVGLTP. 387-390 contacts FAD; sequence FFGP.

The protein belongs to the globin family. Two-domain flavohemoproteins subfamily. This sequence in the C-terminal section; belongs to the flavoprotein pyridine nucleotide cytochrome reductase family. Requires heme b as cofactor. FAD serves as cofactor.

The enzyme catalyses 2 nitric oxide + NADPH + 2 O2 = 2 nitrate + NADP(+) + H(+). It catalyses the reaction 2 nitric oxide + NADH + 2 O2 = 2 nitrate + NAD(+) + H(+). Its function is as follows. Is involved in NO detoxification in an aerobic process, termed nitric oxide dioxygenase (NOD) reaction that utilizes O(2) and NAD(P)H to convert NO to nitrate, which protects the bacterium from various noxious nitrogen compounds. Therefore, plays a central role in the inducible response to nitrosative stress. This chain is Flavohemoprotein, found in Xylella fastidiosa (strain 9a5c).